The sequence spans 183 residues: Troponin I, fast skeletal muscle (183 aa).

The residue at position 2 (Ser-2) is an N-acetylserine. The interval 2–48 is involved in binding TNC; sequence SDEEKKRRAATARRQHLKSAMLQLAVTEIEKEAAAKEVEKQNYLAEH. Residues 97 to 117 are involved in binding TNC and actin; the sequence is SQKLFDLRGKFKRPPLRRVRM.

It belongs to the troponin I family. Binds to actin and tropomyosin. The N-terminus is blocked.

Troponin I is the inhibitory subunit of troponin, the thin filament regulatory complex which confers calcium-sensitivity to striated muscle actomyosin ATPase activity. In Gallus gallus (Chicken), this protein is Troponin I, fast skeletal muscle (TNNI2).